A 175-amino-acid polypeptide reads, in one-letter code: Cytidylate kinase (175 aa).

7-15 (GLPGSGTTT) provides a ligand contact to ATP.

Belongs to the cytidylate kinase family. Type 2 subfamily.

It localises to the cytoplasm. The catalysed reaction is CMP + ATP = CDP + ADP. The enzyme catalyses dCMP + ATP = dCDP + ADP. The chain is Cytidylate kinase from Methanococcoides burtonii (strain DSM 6242 / NBRC 107633 / OCM 468 / ACE-M).